The primary structure comprises 435 residues: Nucleoredoxin (435 aa).

An N-acetylserine modification is found at serine 2. The Thioredoxin domain maps to 167 to 314 (PKPFREVIAG…FPWHPKPVLE (148 aa)).

Belongs to the nucleoredoxin family. In terms of assembly, associates with the phosphatase 2A holoenzyme. Interacts with PPP2CA; the interaction is direct. Interacts with DVL1 (via PDZ domain); the interaction is direct and regulated by oxidative stress. In terms of tissue distribution, widely expressed with higher expression in testis and skin.

Its subcellular location is the cytoplasm. The protein localises to the cytosol. The protein resides in the nucleus. It carries out the reaction [protein]-dithiol + NAD(+) = [protein]-disulfide + NADH + H(+). The enzyme catalyses [protein]-dithiol + NADP(+) = [protein]-disulfide + NADPH + H(+). Functionally, functions as a redox-dependent negative regulator of the Wnt signaling pathway, possibly by preventing ubiquitination of DVL3 by the BCR(KLHL12) complex. May also function as a transcriptional regulator act as a regulator of protein phosphatase 2A (PP2A). The protein is Nucleoredoxin (Nxn) of Mus musculus (Mouse).